A 511-amino-acid chain; its full sequence is MVKQIMIQGTASDAGKSVLVAGLCRLFKNKGKRVVPFKSQNMSLNSFITATGDEMGRAQVFQAEAAGVFPDVRMNPVLLKPTNDRQSQVIFMGAILDNMDAVTYHDFKQTLIPKIQAVYQSLADENDIIVLEGAGSPAEINLNDRDIVNMGMAKMVDAPVVLVADIDKGGVFASIYGTIMLLNEEERARIKGVIINKFRGDVALLQPGIDMIEELTNVPVIGVIPYANLQLEEEDSVSLSGKNYVPDSNALLDIAIICLPRISNFTDFHSLEIQPEISLRYIRNLADFGKPDLVIIPGSKNTLEDMAFLEESGLKKAIQNFAENAGKVIGICGGYQMLGKKMLDPNQVESKQLEIAGLGLLDTETIFLDQKRTTQITGVTHSGEAVEGYEIHMGETKRGESTSPFCEIKAVNGNEETHQDGAISVNKNIIGTYIHGIFDNDVFLGNLFDELLTRKNKSVYPHEIINLKEHKEQEYDKLAALLEANIQMDQLEKIMKGEKICVSTQKPAIKE.

One can recognise a GATase cobBQ-type domain in the interval 251-443 (LLDIAIICLP…IHGIFDNDVF (193 aa)). Residue cysteine 332 is the Nucleophile of the active site. Histidine 435 is a catalytic residue.

The protein belongs to the CobB/CobQ family. CobQ subfamily.

The protein operates within cofactor biosynthesis; adenosylcobalamin biosynthesis. Catalyzes amidations at positions B, D, E, and G on adenosylcobyrinic A,C-diamide. NH(2) groups are provided by glutamine, and one molecule of ATP is hydrogenolyzed for each amidation. This is Cobyric acid synthase from Listeria monocytogenes serotype 4b (strain F2365).